Here is an 822-residue protein sequence, read N- to C-terminus: Glycerol-3-phosphate acyltransferase (822 aa).

Residues 306-311 (CHRSHM) carry the HXXXXD motif motif. Residues 803-822 (ASSSAEMEAESQAVEETTQE) are disordered.

This sequence belongs to the GPAT/DAPAT family.

The protein localises to the cell inner membrane. It carries out the reaction sn-glycerol 3-phosphate + an acyl-CoA = a 1-acyl-sn-glycero-3-phosphate + CoA. The protein operates within phospholipid metabolism; CDP-diacylglycerol biosynthesis; CDP-diacylglycerol from sn-glycerol 3-phosphate: step 1/3. The protein is Glycerol-3-phosphate acyltransferase of Pectobacterium carotovorum subsp. carotovorum (strain PC1).